Reading from the N-terminus, the 818-residue chain is Dipeptidyl aminopeptidase B (818 aa).

Over 1 to 29 (MEGGEEEVERIPDELFDTKKKHLLDKLIR) the chain is Cytoplasmic. A helical; Signal-anchor for type II membrane protein membrane pass occupies residues 30–45 (VGIILVLLIWGTVLLL). Over 46–818 (KSIPHHSNTP…KRAFDGQFVK (773 aa)) the chain is Lumenal. Residues N63, N79, N110, N139, N372, N392, and N421 are each glycosylated (N-linked (GlcNAc...) asparagine). S679 serves as the catalytic Charge relay system. A glycan (N-linked (GlcNAc...) asparagine) is linked at N738. Catalysis depends on charge relay system residues D756 and H789.

The protein belongs to the peptidase S9B family.

The protein resides in the vacuole membrane. The chain is Dipeptidyl aminopeptidase B (DAP2) from Saccharomyces cerevisiae (strain ATCC 204508 / S288c) (Baker's yeast).